Consider the following 397-residue polypeptide: pH-sensitive adenylate cyclase MT1302 (397 aa).

The regulatory domain stretch occupies residues 1–191 (MTDHVREADD…IQDMLFMQLR (191 aa)). The interval 192–206 (HMMETEAVNAGERAA) is linker. The segment at 211–397 (PGARQVTVAF…QDDDLAGSSP (187 aa)) is catalytic domain. In terms of domain architecture, Guanylate cyclase spans 217–325 (TVAFADLVGF…SPVNVASRVT (109 aa)). A Mn(2+)-binding site is contributed by Asp222. Lys261 provides a ligand contact to substrate. Asp265 serves as a coordination point for Mn(2+). Position 298 (Arg298) interacts with ATP. Substrate is bound at residue Asp312.

Belongs to the adenylyl cyclase class-4/guanylyl cyclase family. In terms of assembly, homodimer. It depends on Mn(2+) as a cofactor. Requires Mg(2+) as cofactor.

It catalyses the reaction ATP = 3',5'-cyclic AMP + diphosphate. In terms of biological role, catalyzes the formation of the second messenger cAMP. The chain is pH-sensitive adenylate cyclase MT1302 from Mycobacterium tuberculosis (strain CDC 1551 / Oshkosh).